Here is a 117-residue protein sequence, read N- to C-terminus: Large ribosomal subunit protein uL18 (117 aa).

This sequence belongs to the universal ribosomal protein uL18 family. As to quaternary structure, part of the 50S ribosomal subunit; part of the 5S rRNA/L5/L18/L25 subcomplex. Contacts the 5S and 23S rRNAs.

Its function is as follows. This is one of the proteins that bind and probably mediate the attachment of the 5S RNA into the large ribosomal subunit, where it forms part of the central protuberance. The polypeptide is Large ribosomal subunit protein uL18 (Onion yellows phytoplasma (strain OY-M)).